Reading from the N-terminus, the 318-residue chain is MRVILGPMEGVLDHLMREMLTEINDYDFCVTEFVRVVSQPLPDHVFYRLCPELKQGSKTKNGVPVKVQLLGQDPHWMAENAIRAAQLGAHGIDLNFGCPAKMVNQSKGGAALLQHPELIYQVVKACRDAVPSHIPVSAKIRLGWENPEDCFEIVDAVEQGKADELTVHARTKAGGYKASEIKWDYIDQIRQRSTIPLIANGEIWNYADGQACIETTGIDSLMVCRGALNVPNLGNIVKHNHRAMPWHEVVDLLLKYTQYEVRGDKGKYYPNRIKQWFAYLRQAYPQAADLFRDIRTLTQVESIVEHLHHYREQLEVAQ.

Residues 7–9 (PME) and Gln68 contribute to the FMN site. The active-site Proton donor is the Cys98. Residues Lys139, 200–202 (NGE), and 224–225 (CR) each bind FMN.

It belongs to the Dus family. DusC subfamily. FMN is required as a cofactor.

It carries out the reaction 5,6-dihydrouridine(16) in tRNA + NADP(+) = uridine(16) in tRNA + NADPH + H(+). It catalyses the reaction 5,6-dihydrouridine(16) in tRNA + NAD(+) = uridine(16) in tRNA + NADH + H(+). In terms of biological role, catalyzes the synthesis of 5,6-dihydrouridine (D), a modified base found in the D-loop of most tRNAs, via the reduction of the C5-C6 double bond in target uridines. Specifically modifies U16 in tRNAs. This Vibrio vulnificus (strain CMCP6) protein is tRNA-dihydrouridine(16) synthase.